Reading from the N-terminus, the 348-residue chain is Rhodopsin (348 aa).

Position 1 is an N-acetylmethionine (methionine 1). Topologically, residues 1–36 are extracellular; that stretch reads MNGTEGPNFYVPFSNITGVVRSPFEQPQYYLAEPWQ. Asparagine 2 and asparagine 15 each carry an N-linked (GlcNAc...) asparagine glycan. A helical membrane pass occupies residues 37-61; that stretch reads FSMLAAYMFLLIVLGFPINFLTLYV. Residues 62 to 73 lie on the Cytoplasmic side of the membrane; sequence TVQHKKLRTPLN. Residues 74 to 96 traverse the membrane as a helical segment; the sequence is YILLNLAVADLFMVFGGFTTTLY. The Extracellular segment spans residues 97-110; sequence TSLHGYFVFGPTGC. An intrachain disulfide couples cysteine 110 to cysteine 187. Residues 111 to 133 traverse the membrane as a helical segment; it reads NLEGFFATLGGEIGLWSLVVLAI. Positions 134 to 136 match the 'Ionic lock' involved in activated form stabilization motif; sequence ERY. Topologically, residues 134–152 are cytoplasmic; the sequence is ERYVVVCKPMSNFRFGENH. The helical transmembrane segment at 153–173 threads the bilayer; the sequence is AIMGVAFTWVMALACAAPPLV. At 174 to 202 the chain is on the extracellular side; it reads GWSRYIPEGMQCSCGIDYYTLKPEVNNES. Residue glutamate 201 coordinates Zn(2+). Residues 203–224 form a helical membrane-spanning segment; it reads FVIYMFVVHFTIPMIVIFFCYG. The Cytoplasmic segment spans residues 225–252; the sequence is QLVFTVKEAAAQQQESATTQKAEKEVTR. A helical membrane pass occupies residues 253 to 274; that stretch reads MVIIMVIFFLICWLPYASVAMY. The Extracellular portion of the chain corresponds to 275-286; it reads IFTHQGSNFGPI. A Zn(2+)-binding site is contributed by glutamine 279. The chain crosses the membrane as a helical span at residues 287–308; that stretch reads FMTLPAFFAKTASIYNPIIYIM. Lysine 296 is modified (N6-(retinylidene)lysine). Residues 309–348 lie on the Cytoplasmic side of the membrane; sequence MNKQFRNCMLTSLCCGKNPLGDDEASATASKTETSQVAPA. Residues cysteine 322 and cysteine 323 are each lipidated (S-palmitoyl cysteine). The tract at residues 330–348 is interaction with SAG; sequence DDEASATASKTETSQVAPA. The residue at position 334 (serine 334) is a Phosphoserine. Residue threonine 336 is modified to Phosphothreonine. Serine 338 is subject to Phosphoserine. Phosphothreonine occurs at positions 340 and 342. At serine 343 the chain carries Phosphoserine.

It belongs to the G-protein coupled receptor 1 family. Opsin subfamily. In terms of assembly, homodimer. May form a complex composed of RHO, GRK1 and RCVRN in a Ca(2+)-dependent manner; RCVRN prevents the interaction between GRK1 and RHO. Interacts with GRK1. Interacts (phosphorylated form) with SAG. Interacts with GNAT1. Interacts with GNAT3. SAG and G-proteins compete for a common binding site. Interacts with PRCD; the interaction promotes PRCD stability. Forms a complex with ASAP1 and ARF4. Forms a complex with ASAP1, RAB11A, Rabin8/RAB3IP, ARF4 and RAB11FIP3; the complex regulates Golgi-to-cilia rhodopsin/RHO transport in photoreceptors. Phosphorylated on some or all of the serine and threonine residues present in the C-terminal region. Post-translationally, contains one covalently linked retinal chromophore. Upon light absorption, the covalently bound 11-cis-retinal is converted to all-trans-retinal. After hydrolysis of the Schiff base and release of the covalently bound all-trans-retinal, active rhodopsin is regenerated by binding of a fresh molecule of 11-cis-retinal.

It localises to the membrane. It is found in the cell projection. The protein resides in the cilium. Its subcellular location is the photoreceptor outer segment. Functionally, photoreceptor required for image-forming vision at low light intensity. Required for photoreceptor cell viability after birth. Light-induced isomerization of 11-cis to all-trans retinal triggers a conformational change that activates signaling via G-proteins. Subsequent receptor phosphorylation mediates displacement of the bound G-protein alpha subunit by the arrestin SAG and terminates signaling. This Rattus norvegicus (Rat) protein is Rhodopsin (Rho).